Reading from the N-terminus, the 418-residue chain is Tyrosine--tRNA ligase (418 aa).

Tyr-35 provides a ligand contact to L-tyrosine. Residues 40–49 carry the 'HIGH' region motif; the sequence is PTAKSLHIGH. Residues Tyr-168 and Gln-172 each contribute to the L-tyrosine site. The 'KMSKS' region signature appears at 228–232; it reads KYGKT. Residue Lys-231 coordinates ATP. Residues 352–410 enclose the S4 RNA-binding domain; the sequence is PTVVGAMVAAGVVDTKSGGRRAVAEGGAYLNNVKVADPDQRLTDDDFLCGRVALVRRGK.

Belongs to the class-I aminoacyl-tRNA synthetase family. TyrS type 1 subfamily. As to quaternary structure, homodimer.

The protein resides in the cytoplasm. The catalysed reaction is tRNA(Tyr) + L-tyrosine + ATP = L-tyrosyl-tRNA(Tyr) + AMP + diphosphate + H(+). Its function is as follows. Catalyzes the attachment of tyrosine to tRNA(Tyr) in a two-step reaction: tyrosine is first activated by ATP to form Tyr-AMP and then transferred to the acceptor end of tRNA(Tyr). The chain is Tyrosine--tRNA ligase from Cutibacterium acnes (strain DSM 16379 / KPA171202) (Propionibacterium acnes).